The sequence spans 236 residues: Small ribosomal subunit protein eS6 (236 aa).

Belongs to the eukaryotic ribosomal protein eS6 family. Component of the small ribosomal subunit. Part of the small subunit (SSU) processome, composed of more than 70 proteins and the RNA chaperone small nucleolar RNA (snoRNA) U3. Ribosomal protein S6 is the major substrate of protein kinases in eukaryote ribosomes.

It localises to the cytoplasm. The protein localises to the nucleus. Its subcellular location is the nucleolus. In terms of biological role, component of the 40S small ribosomal subunit. Plays an important role in controlling cell growth and proliferation through the selective translation of particular classes of mRNA. Part of the small subunit (SSU) processome, first precursor of the small eukaryotic ribosomal subunit. During the assembly of the SSU processome in the nucleolus, many ribosome biogenesis factors, an RNA chaperone and ribosomal proteins associate with the nascent pre-rRNA and work in concert to generate RNA folding, modifications, rearrangements and cleavage as well as targeted degradation of pre-ribosomal RNA by the RNA exosome. The polypeptide is Small ribosomal subunit protein eS6 (rps6) (Dictyostelium discoideum (Social amoeba)).